We begin with the raw amino-acid sequence, 488 residues long: ATP synthase subunit beta (488 aa).

164-171 (GGAGVGKT) is a binding site for ATP.

This sequence belongs to the ATPase alpha/beta chains family. F-type ATPases have 2 components, CF(1) - the catalytic core - and CF(0) - the membrane proton channel. CF(1) has five subunits: alpha(3), beta(3), gamma(1), delta(1), epsilon(1). CF(0) has four main subunits: a(1), b(1), b'(1) and c(9-12).

It localises to the cellular thylakoid membrane. It catalyses the reaction ATP + H2O + 4 H(+)(in) = ADP + phosphate + 5 H(+)(out). Produces ATP from ADP in the presence of a proton gradient across the membrane. The catalytic sites are hosted primarily by the beta subunits. This Prochlorococcus marinus (strain NATL1A) protein is ATP synthase subunit beta.